We begin with the raw amino-acid sequence, 281 residues long: Glycerol uptake facilitator protein (281 aa).

At 1-5 the chain is on the cytoplasmic side; sequence MSQTS. Residues 6–34 form a helical membrane-spanning segment; sequence TLKGQCIAEFLGTGLLIFFGVGCVAALKV. Residues 35–39 lie on the Periplasmic side of the membrane; that stretch reads AGASF. The helical transmembrane segment at 40–60 threads the bilayer; it reads GQWEISVIWGLGVAMAIYLTA. Residues 61–63 are Cytoplasmic-facing; it reads GVS. The stretch at 64–67 is an intramembrane region; that stretch reads GAHL. The NPA 1 motif lies at 68-70; sequence NPA. The helical intramembrane region spans 68–78; the sequence is NPAVTIALWLF. Residues 79-84 are Cytoplasmic-facing; it reads ACFDKR. The chain crosses the membrane as a helical span at residues 85-108; it reads KVIPFIVSQVAGAFCAAALVYGLY. At 109 to 143 the chain is on the periplasmic side; that stretch reads YNLFFDFEQTHHIVRGSVESVDLAGTFSTYPNPHI. Residues 144-169 form a helical membrane-spanning segment; sequence NFVQAFAVEMVITAILMGLILALTDD. Over 170–177 the chain is Cytoplasmic; it reads GNGVPRGP. The chain crosses the membrane as a helical span at residues 178–194; it reads LAPLLIGLLIAVIGASM. The Periplasmic portion of the chain corresponds to 195–198; it reads GPLT. Residues 199-202 lie within the membrane without spanning it; the sequence is GFAM. The NPA 2 signature appears at 203-205; the sequence is NPA. The helical intramembrane region spans 203–216; sequence NPARDFGPKVFAWL. Topologically, residues 217–231 are periplasmic; that stretch reads AGWGNVAFTGGRDIP. Residues 232–254 traverse the membrane as a helical segment; that stretch reads YFLVPLFGPIVGAIVGAFAYRKL. Over 255-281 the chain is Cytoplasmic; the sequence is IGRHLPCDICVVEEKETTTPSEQKASL.

The protein belongs to the MIP/aquaporin (TC 1.A.8) family. In terms of assembly, homotetramer.

Its subcellular location is the cell inner membrane. The catalysed reaction is glycerol(in) = glycerol(out). Functionally, mediates glycerol diffusion across the cytoplasmic membrane via a pore-type mechanism. This chain is Glycerol uptake facilitator protein (glpF), found in Escherichia coli O157:H7.